The sequence spans 112 residues: T cell receptor alpha variable 21 (112 aa).

Residues 1 to 19 (METLLGLLILWLQLQWVSS) form the signal peptide. One can recognise an Ig-like domain in the interval 21–112 (QEVTQIPAAL…DSATYLCAVR (92 aa)). Asn-41 and Asn-82 each carry an N-linked (GlcNAc...) asparagine glycan. A disulfide bridge links Cys-42 with Cys-109.

In terms of assembly, alpha-beta TR is a heterodimer composed of an alpha and beta chain; disulfide-linked. The alpha-beta TR is associated with the transmembrane signaling CD3 coreceptor proteins to form the TR-CD3 (TcR or TCR). The assembly of alpha-beta TR heterodimers with CD3 occurs in the endoplasmic reticulum where a single alpha-beta TR heterodimer associates with one CD3D-CD3E heterodimer, one CD3G-CD3E heterodimer and one CD247 homodimer forming a stable octameric structure. CD3D-CD3E and CD3G-CD3E heterodimers preferentially associate with TR alpha and TR beta chains, respectively. The association of the CD247 homodimer is the last step of TcR assembly in the endoplasmic reticulum and is required for transport to the cell surface.

It is found in the cell membrane. Functionally, v region of the variable domain of T cell receptor (TR) alpha chain that participates in the antigen recognition. Alpha-beta T cell receptors are antigen specific receptors which are essential to the immune response and are present on the cell surface of T lymphocytes. Recognize peptide-major histocompatibility (MH) (pMH) complexes that are displayed by antigen presenting cells (APC), a prerequisite for efficient T cell adaptive immunity against pathogens. Binding of alpha-beta TR to pMH complex initiates TR-CD3 clustering on the cell surface and intracellular activation of LCK that phosphorylates the ITAM motifs of CD3G, CD3D, CD3E and CD247 enabling the recruitment of ZAP70. In turn ZAP70 phosphorylates LAT, which recruits numerous signaling molecules to form the LAT signalosome. The LAT signalosome propagates signal branching to three major signaling pathways, the calcium, the mitogen-activated protein kinase (MAPK) kinase and the nuclear factor NF-kappa-B (NF-kB) pathways, leading to the mobilization of transcription factors that are critical for gene expression and essential for T cell growth and differentiation. The T cell repertoire is generated in the thymus, by V-(D)-J rearrangement. This repertoire is then shaped by intrathymic selection events to generate a peripheral T cell pool of self-MH restricted, non-autoaggressive T cells. Post-thymic interaction of alpha-beta TR with the pMH complexes shapes TR structural and functional avidity. The polypeptide is T cell receptor alpha variable 21 (Homo sapiens (Human)).